Here is an 866-residue protein sequence, read N- to C-terminus: DNA replication licensing factor MCM4 (866 aa).

Disordered stretches follow at residues 1–67 (MSSP…TSPA), 81–107 (SPLN…TPLR), and 124–145 (GGGS…PVSE). Composition is skewed to polar residues over residues 47–63 (DNIS…SLPA) and 81–93 (SPLN…SMGS). Residues Ser55 and Ser81 each carry the phosphoserine modification. The residue at position 87 (Thr87) is a Phosphothreonine. In terms of domain architecture, MCM spans 460–669 (IYDRLARAIA…FDKRLASHLV (210 aa)). Residue 512 to 519 (GDPGTSKS) coordinates ATP. The short motif at 644 to 647 (SRFD) is the Arginine finger element.

It belongs to the MCM family. Component of the Mcm2-7 complex. The complex forms a toroidal hexameric ring with the proposed subunit order Mcm2-Mcm6-Mcm4-Mcm7-Mcm3-Mcm5. In terms of processing, phosphorylated by the catalytic component of the Dbf4-dependent kinase (DDK) complex Cdc7.

The protein localises to the nucleus. It catalyses the reaction ATP + H2O = ADP + phosphate + H(+). Acts as a component of the Mcm2-7 complex (Mcm complex) which is the putative replicative helicase essential for 'once per cell cycle' DNA replication initiation and elongation in eukaryotic cells. The active ATPase sites in the Mcm2-7 ring are formed through the interaction surfaces of two neighboring subunits such that a critical structure of a conserved arginine finger motif is provided in trans relative to the ATP-binding site of the Walker A box of the adjacent subunit. The six ATPase active sites, however, are likely to contribute differentially to the complex helicase activity. Required for DNA replication and cell proliferation. Essential role in mitotic DNA replication but not in endoreplication. This is DNA replication licensing factor MCM4 (dpa) from Drosophila melanogaster (Fruit fly).